We begin with the raw amino-acid sequence, 656 residues long: Very long-chain specific acyl-CoA dehydrogenase, mitochondrial (656 aa).

The interval 1–33 (MQSARMTPSVGRQLLRLGARSSRSTTVLQGQPR) is disordered. The N-terminal 41 residues, 1 to 41 (MQSARMTPSVGRQLLRLGARSSRSTTVLQGQPRPISAQRLY), are a transit peptide targeting the mitochondrion. The interval 42 to 483 (AREATQAVLD…ALQGCMDKGK (442 aa)) is catalytic. At lysine 52 the chain carries N6-acetyllysine. N6-acetyllysine; alternate is present on residues lysine 72 and lysine 128. Lysine 72 and lysine 128 each carry N6-succinyllysine; alternate. An N6-succinyllysine modification is found at lysine 196. FAD is bound at residue 215–224 (FCLTEPSSGS). Residue cysteine 238 is modified to S-nitrosocysteine. Lysine 240 is modified (N6-acetyllysine; alternate). Residue lysine 240 is modified to N6-succinyllysine; alternate. 250–252 (WIS) provides a ligand contact to FAD. Lysine 269 bears the N6-succinyllysine mark. Residues lysine 277 and lysine 279 each carry the N6-acetyllysine; alternate modification. 2 positions are modified to N6-succinyllysine; alternate: lysine 277 and lysine 279. 2 positions are modified to N6-acetyllysine: lysine 299 and lysine 317. N6-acetyllysine; alternate is present on lysine 332. N6-succinyllysine; alternate is present on lysine 332. Lysine 373 carries the post-translational modification N6-succinyllysine. 462 to 464 (FEG) is a substrate binding site. Glutamate 463 functions as the Proton acceptor in the catalytic mechanism. 465 to 467 (AND) serves as a coordination point for FAD. Lysine 483 is subject to N6-acetyllysine; alternate. Lysine 483 is subject to N6-succinyllysine; alternate. The segment at 484–517 (ELTGLGNALKNPFGNVGLLMGEAGKQLRRRTGIG) is membrane-anchoring. Serine 518 and serine 523 each carry phosphoserine. Position 551 is an N6-acetyllysine (lysine 551). Lysine 557 carries the post-translational modification N6-acetyllysine; alternate. Lysine 557 is subject to N6-succinyllysine; alternate. Position 563 (glutamine 563) interacts with FAD. The residue at position 640 (lysine 640) is an N6-succinyllysine.

This sequence belongs to the acyl-CoA dehydrogenase family. As to quaternary structure, homodimer. Homodimerizes after import into the mitochondrion. Requires FAD as cofactor. Post-translationally, S-nitrosylation at Cys-238 in liver improves catalytic efficiency.

It localises to the mitochondrion inner membrane. It carries out the reaction a very-long-chain 2,3-saturated fatty acyl-CoA + oxidized [electron-transfer flavoprotein] + H(+) = a very-long-chain (2E)-enoyl-CoA + reduced [electron-transfer flavoprotein]. The enzyme catalyses dodecanoyl-CoA + oxidized [electron-transfer flavoprotein] + H(+) = (2E)-dodecenoyl-CoA + reduced [electron-transfer flavoprotein]. It catalyses the reaction tetradecanoyl-CoA + oxidized [electron-transfer flavoprotein] + H(+) = (2E)-tetradecenoyl-CoA + reduced [electron-transfer flavoprotein]. The catalysed reaction is oxidized [electron-transfer flavoprotein] + hexadecanoyl-CoA + H(+) = (2E)-hexadecenoyl-CoA + reduced [electron-transfer flavoprotein]. It carries out the reaction octadecanoyl-CoA + oxidized [electron-transfer flavoprotein] + H(+) = (2E)-octadecenoyl-CoA + reduced [electron-transfer flavoprotein]. The enzyme catalyses eicosanoyl-CoA + oxidized [electron-transfer flavoprotein] + H(+) = (2E)-eicosenoyl-CoA + reduced [electron-transfer flavoprotein]. It catalyses the reaction docosanoyl-CoA + oxidized [electron-transfer flavoprotein] + H(+) = (2E)-docosenoyl-CoA + reduced [electron-transfer flavoprotein]. The catalysed reaction is tetracosanoyl-CoA + oxidized [electron-transfer flavoprotein] + H(+) = (2E)-tetracosenoyl-CoA + reduced [electron-transfer flavoprotein]. Its pathway is lipid metabolism; mitochondrial fatty acid beta-oxidation. Functionally, very long-chain specific acyl-CoA dehydrogenase is one of the acyl-CoA dehydrogenases that catalyze the first step of mitochondrial fatty acid beta-oxidation, an aerobic process breaking down fatty acids into acetyl-CoA and allowing the production of energy from fats. The first step of fatty acid beta-oxidation consists in the removal of one hydrogen from C-2 and C-3 of the straight-chain fatty acyl-CoA thioester, resulting in the formation of trans-2-enoyl-CoA. Among the different mitochondrial acyl-CoA dehydrogenases, very long-chain specific acyl-CoA dehydrogenase acts specifically on acyl-CoAs with saturated 12 to 24 carbons long primary chains. The sequence is that of Very long-chain specific acyl-CoA dehydrogenase, mitochondrial from Mus musculus (Mouse).